The chain runs to 174 residues: RNA pyrophosphohydrolase (174 aa).

Residues 6–149 enclose the Nudix hydrolase domain; it reads GYRPNVGIIL…KRDVYLGALK (144 aa). The Nudix box signature appears at 38 to 59; it reads GGIKPGESPETAMYRELYEEVG.

This sequence belongs to the Nudix hydrolase family. RppH subfamily. The cofactor is a divalent metal cation.

Its function is as follows. Accelerates the degradation of transcripts by removing pyrophosphate from the 5'-end of triphosphorylated RNA, leading to a more labile monophosphorylated state that can stimulate subsequent ribonuclease cleavage. The chain is RNA pyrophosphohydrolase from Neisseria meningitidis serogroup C (strain 053442).